A 176-amino-acid polypeptide reads, in one-letter code: Protein CURLY FLAG LEAF 2 (176 aa).

The EAR signature appears at Phe-41–Ser-46. Residues Phe-48–Lys-82 form the WW domain. Disordered stretches follow at residues Lys-77–Glu-106 and Tyr-111–Glu-130. Over residues Ser-93–Glu-106 the composition is skewed to low complexity.

In terms of assembly, may interact with BHLH122/CFLAP1 and BHLH80/CFLAP2.

May negatively regulate the cuticle development by interacting with the HD-ZIP IV transcription factor HDG1. In Arabidopsis thaliana (Mouse-ear cress), this protein is Protein CURLY FLAG LEAF 2.